A 340-amino-acid polypeptide reads, in one-letter code: Phenylalanine--tRNA ligase alpha subunit (340 aa).

Mg(2+) is bound at residue Glu-255.

Belongs to the class-II aminoacyl-tRNA synthetase family. Phe-tRNA synthetase alpha subunit type 1 subfamily. In terms of assembly, tetramer of two alpha and two beta subunits. The cofactor is Mg(2+).

The protein resides in the cytoplasm. The enzyme catalyses tRNA(Phe) + L-phenylalanine + ATP = L-phenylalanyl-tRNA(Phe) + AMP + diphosphate + H(+). The protein is Phenylalanine--tRNA ligase alpha subunit of Desulfitobacterium hafniense (strain DSM 10664 / DCB-2).